An 82-amino-acid chain; its full sequence is Protein transport protein SBH1 (82 aa).

The disordered stretch occupies residues 1-36; sequence MSSPTPPGGQRTLQKRKQGSSQKVAASAPKKNTNSN. Residues 1 to 53 are Cytoplasmic-facing; the sequence is MSSPTPPGGQRTLQKRKQGSSQKVAASAPKKNTNSNNSILKIYSDEATGLRVD. A compositionally biased stretch (polar residues) spans 19 to 36; that stretch reads GSSQKVAASAPKKNTNSN. A helical transmembrane segment spans residues 54–74; sequence PLVVLFLAVGFIFSVVALHVI.

Belongs to the SEC61-beta family. As to quaternary structure, component of the heterotrimeric Sec61 complex, which is composed of SSH1, SBH1 and SSS1. Presumably three to four Sec61 heterotrimers assemble into an oligomeric ring with a central aqueous pore. In cotranslational ER import, the pore diameter varies from 9-15 A in a ribosome-free resting state to 40-60 A in a functional state when associated with the ribosome. The Sec61 complex is part of a channel-forming translocon complex whose composition seem to change dependent upon different functional states. During post-translational ER import the Sec61 complex associates with the Sec62/63 complex to form the Sec complex. SBH1 interacts OST2, OST4 and WBP1 components of the OT complex.

It is found in the endoplasmic reticulum membrane. Part of the Sec61 complex, which is the major component of a channel-forming translocon complex that mediates protein translocation across the endoplasmic reticulum (ER). The functional states of the translocon complex include co- and post-translational ER import, cotranslational membrane protein integration and retrograde transport of misfolded proteins out of the ER. In the cotranslational pathway, ribosomes synthesizing presecretory proteins are targeted to the translocon by the cytosolic signal recognition particle (SRP) and its ER-localized receptor. The association of the Sec61 complex with the ribosome is mediated by the 28S rRNA of the large ribosomal subunit. SRP-independent post-translational translocation requires the association of additional factors, such as the Sec62/63 complex and KAR2. This Saccharomyces cerevisiae (strain ATCC 204508 / S288c) (Baker's yeast) protein is Protein transport protein SBH1 (SBH1).